Here is a 105-residue protein sequence, read N- to C-terminus: Class I hydrophobin 1 (105 aa).

The N-terminal stretch at 1–17 (MQFTSFAILAISAVASA) is a signal peptide. 4 disulfides stabilise this stretch: Cys-36–Cys-85, Cys-44–Cys-78, Cys-45–Cys-63, and Cys-86–Cys-100. N-linked (GlcNAc...) asparagine glycans are attached at residues Asn-48, Asn-67, and Asn-97.

It belongs to the fungal hydrophobin family. In terms of assembly, self-assembles to form functional amyloid fibrils called rodlets. Self-assembly into fibrillar rodlets occurs spontaneously at hydrophobic:hydrophilic interfaces and the rodlets further associate laterally to form amphipathic monolayers. In terms of tissue distribution, abundant on conidia and aerial structures formed in vitro and emerging from disease lesions on infected tomato plants.

It is found in the secreted. It localises to the cell wall. Its function is as follows. Aerial growth, conidiation, and dispersal of filamentous fungi in the environment rely upon a capability of their secreting small amphipathic proteins called hydrophobins (HPBs) with low sequence identity. Class I can self-assemble into an outermost layer of rodlet bundles on aerial cell surfaces, conferring cellular hydrophobicity that supports fungal growth, development and dispersal; whereas Class II form highly ordered films at water-air interfaces through intermolecular interactions but contribute nothing to the rodlet structure. Hcf-1 is a class I hydrophobin that is not necessary for the development of hyphae or conidia but acts as the main determinant of conidium hydrophobicity and, thus, is required for efficient water-mediated dispersal of conidia. Forms a component of the rodlet layer, but other hydrophobins must also participate in this proces. The chain is Class I hydrophobin 1 from Passalora fulva (Tomato leaf mold).